The sequence spans 1094 residues: MAARQAVGSGAQETCGLDRILEALKLLLSPGGSGSSSLQVTKHDVLLATLKSNLSALEDKFLKDPQWKNLKLLRDEIADKAEWPQNSVDVTWSFTSQTLLLLLCLKETMIRLAANFNPGKPNPRTPEVAPALSPDALSISQQKTVQFVLQFVVTLGICPYLMPGVGVPLRYRTEFGAVVQDVVCFDAAPDATRRLYTSCKALLNVAQHTSLGSLIFCHHFGDIAAGLCQLGFCPTKRKLLTPAEEVLTEEERTLSRGALRDMLDQVYQPLAVRELLILQGGPPQSCTDVKTQMRCRAPAWLRRLCGQLLSERLMRPNGVQAVVRGILEGAGAGAAGGSDAEVTAADWKKCDLIAKILASCPQQSLSPENYYRDICPQVLDLFHFQDKLTARQFQRVATTTFITLSRERPHLAAKYLLQPVLAPLHRCLNTAELSESDMVPGTILVTEEELSRCIEDVFKVYVVGNEPLTVLMDSLLPVLGVLFLLYCFTKQSVSHIRSLCQEILLWILGKLERKKAIASLKGFAGLDKAVPSLHSLCQFRVATQGGIMITIKEAISDEDEDEALYQKVSSEQGRVEHLGDLLSHCQECGLAGDFFIFCLKELTHVASENETELKTEPFSSKSLLELEQHQTLLVEGQERKLLVLQLMAVLCERMSEQIFTNVTQVVDFVAATLQRACASLAHQAESTVESQTLSMSMGLVAVMLGGAVQLKSSDFAVLKQLLPLLEKVSNTYPDPVIQELAVDLRITISTHGAFATEAVSMAAQSTLNRKDLEGKIEEQQQTSHERPTDVAHSHLEQQQSHETAPQTGLQSNAPIIPQGVNEPSTTTSQKSGSVTTEQLQEVLLSAYDPQIPTRAAALRTLSHWIEQREAKALEMQEKLLKIFLENLEHEDTFVYLSAIQGVALLSDVYPEKILPDLLAQYDSSKDKHTPETRMKVGEVLMRIVRALGDMVSKYREPLIHTFLRGVRDPDGAHRASSLANLGELCQRLDFLLGSVVHEVTACLIAVAKTDGEVQVRRAAIHVVVLLLRGLSQKATEVLSAVLKDLYHLLKHVVCLEPDDVAKLHAQLALEELDDIMKNFLFPPQKLEKKIMVLP.

The helical transmembrane segment at 468–488 (LTVLMDSLLPVLGVLFLLYCF) threads the bilayer. Serine 556 carries the post-translational modification Phosphoserine. Over residues 777 to 795 (EEQQQTSHERPTDVAHSHL) the composition is skewed to basic and acidic residues. Residues 777 to 834 (EEQQQTSHERPTDVAHSHLEQQQSHETAPQTGLQSNAPIIPQGVNEPSTTTSQKSGSV) are disordered. Polar residues-rich tracts occupy residues 796 to 813 (EQQQSHETAPQTGLQSNA) and 821 to 834 (NEPSTTTSQKSGSV). 2 HEAT repeats span residues 873–909 (LEMQEKLLKIFLENLEHEDTFVYLSAIQGVALLSDVY) and 952–988 (SKYREPLIHTFLRGVRDPDGAHRASSLANLGELCQRL).

This sequence belongs to the Tango6 family.

It localises to the membrane. This is Transport and Golgi organization protein 6 homolog (TANGO6) from Homo sapiens (Human).